The chain runs to 1310 residues: Contactin-associated protein-like 4 (1310 aa).

The signal sequence occupies residues 1-27 (MNMGSVAGAVLKMLLLLSTQNWNRVEA). Over 28–1243 (GNSYDCDEPL…LTHAIKSDSA (1216 aa)) the chain is Extracellular. The F5/8 type C domain occupies 33-179 (CDEPLVSALP…IGMRIEVFGC (147 aa)). An intrachain disulfide couples Cys33 to Cys179. The 133-residue stretch at 214 to 346 (FKTMESDGIL…NLFYNGVDVI (133 aa)) folds into the Laminin G-like 1 domain. Asn262, Asn287, and Asn361 each carry an N-linked (GlcNAc...) asparagine glycan. 4 disulfide bridges follow: Cys334/Cys366, Cys517/Cys549, Cys555/Cys566, and Cys560/Cys575. The 130-residue stretch at 400–529 (FRTWNKAGLL…LISINNKMVD (130 aa)) folds into the Laminin G-like 2 domain. N-linked (GlcNAc...) asparagine glycosylation is present at Asn540. The 38-residue stretch at 551–588 (ISDRCLPNSCEHGGECSQSWSTFHCNCTNTGYTGATCH) folds into the EGF-like 1 domain. Asn576 is a glycosylation site (N-linked (GlcNAc...) asparagine). Cys577 and Cys587 are oxidised to a cystine. Positions 589–794 (SSVYEQSCEA…LLCRGDRPFW (206 aa)) constitute a Fibrinogen C-terminal domain. N-linked (GlcNAc...) asparagine glycans are attached at residues Asn604, Asn627, Asn639, Asn708, and Asn750. The region spanning 795 to 960 (NAASFNTEAS…TVTPGVQPGC (166 aa)) is the Laminin G-like 3 domain. Intrachain disulfides connect Cys933/Cys960, Cys964/Cys977, Cys971/Cys986, and Cys988/Cys998. One can recognise an EGF-like 2 domain in the interval 960–999 (CRGHCGSYGKLCRHGGKCREKPSGFFCDCSSSAYAGPFCS). 3 N-linked (GlcNAc...) asparagine glycosylation sites follow: Asn1019, Asn1025, and Asn1075. The region spanning 1048–1204 (FRTTRAPSLL…VTGHVTESSC (157 aa)) is the Laminin G-like 4 domain. An intrachain disulfide couples Cys1169 to Cys1204. A helical membrane pass occupies residues 1244–1264 (VIGGLIAVVIFILLCVSAIAV). Residues 1265-1310 (RIYQQKRLYKRNEAKRSENVDSAEAVLKSELHIQNAVGENQKEYFF) lie on the Cytoplasmic side of the membrane.

It belongs to the neurexin family. In terms of assembly, interacts with TIAM1. As to expression, specifically present in developing cortical interneurons: highly expressed in cortical parvalbumin (PV) cells and midbrain dopaminergic neurons and is localized presynaptically (at protein level). Also present in the substantia nigra pars compacta (SnC) and ventral tegmental area (VTA) midbrain dopaminergic projection populations.

Its subcellular location is the presynaptic cell membrane. Its function is as follows. Presynaptic protein involved in both dopaminergic synaptic transmission and GABAergic system, thereby participating in the structural maturation of inhibitory interneuron synapses. Involved in the dopaminergic synaptic transmission by attenuating dopamine release through a presynaptic mechanism. Also participates in the GABAergic system. This is Contactin-associated protein-like 4 (Cntnap4) from Mus musculus (Mouse).